A 90-amino-acid chain; its full sequence is Putative membrane protein insertion efficiency factor (90 aa).

It belongs to the UPF0161 family.

It localises to the cell membrane. Functionally, could be involved in insertion of integral membrane proteins into the membrane. In Oceanobacillus iheyensis (strain DSM 14371 / CIP 107618 / JCM 11309 / KCTC 3954 / HTE831), this protein is Putative membrane protein insertion efficiency factor.